A 480-amino-acid chain; its full sequence is 6-phosphogluconate dehydrogenase, decarboxylating (480 aa).

NADP(+) contacts are provided by residues glycine 11 to glycine 16, asparagine 34 to serine 36, isoleucine 76 to alanine 78, and asparagine 104. Residues asparagine 104 and serine 130–glycine 132 contribute to the substrate site. The Proton acceptor role is filled by lysine 184. Residue histidine 187–asparagine 188 coordinates substrate. Glutamate 191 serves as the catalytic Proton donor. Tyrosine 192, lysine 261, arginine 288, arginine 448, and histidine 454 together coordinate substrate.

It belongs to the 6-phosphogluconate dehydrogenase family. As to quaternary structure, homodimer.

The catalysed reaction is 6-phospho-D-gluconate + NADP(+) = D-ribulose 5-phosphate + CO2 + NADPH. It functions in the pathway carbohydrate degradation; pentose phosphate pathway; D-ribulose 5-phosphate from D-glucose 6-phosphate (oxidative stage): step 3/3. Functionally, catalyzes the oxidative decarboxylation of 6-phosphogluconate to ribulose 5-phosphate and CO(2), with concomitant reduction of NADP to NADPH. In Chlamydia trachomatis serovar D (strain ATCC VR-885 / DSM 19411 / UW-3/Cx), this protein is 6-phosphogluconate dehydrogenase, decarboxylating (gnd).